We begin with the raw amino-acid sequence, 276 residues long: Undecaprenyl-diphosphatase 2 (276 aa).

8 helical membrane passes run 1–21 (MSLWFLVFLSVLQGVTELFPV), 44–64 (QLLPFLVALHLGTAFALLWYF), 87–107 (GHLMWALIIGTIPAGLVGLLL), 114–134 (VFHDLRIVAVALIVNGILLWL), 150–170 (LTFKQAFFVGLAQVGALIPGF), 190–210 (AAEFSFLLGTPIIFAAGLLEL), 222–242 (DALLGGVLTAIAAYLSVRFLM), and 251–271 (LASFGLYCALAGLFCLGWFMF).

It belongs to the UppP family.

The protein localises to the cell inner membrane. The enzyme catalyses di-trans,octa-cis-undecaprenyl diphosphate + H2O = di-trans,octa-cis-undecaprenyl phosphate + phosphate + H(+). Its function is as follows. Catalyzes the dephosphorylation of undecaprenyl diphosphate (UPP). Confers resistance to bacitracin. The chain is Undecaprenyl-diphosphatase 2 from Burkholderia thailandensis (strain ATCC 700388 / DSM 13276 / CCUG 48851 / CIP 106301 / E264).